A 1002-amino-acid polypeptide reads, in one-letter code: Ephrin type-B receptor 5 (1002 aa).

Positions methionine 1 to serine 29 are cleaved as a signal peptide. Topologically, residues leucine 30 to glycine 564 are extracellular. The region spanning glutamate 31–lysine 213 is the Eph LBD domain. 2 Fibronectin type-III domains span residues alanine 344–serine 452 and valine 453–alanine 548. Asparagine 446 is a glycosylation site (N-linked (GlcNAc...) asparagine). The helical transmembrane segment at serine 565 to phenylalanine 585 threads the bilayer. The Cytoplasmic segment spans residues lysine 586–valine 1002. A Protein kinase domain is found at isoleucine 637 to isoleucine 900. ATP contacts are provided by residues isoleucine 643 to valine 651 and lysine 669. The active-site Proton acceptor is aspartate 762. The segment at leucine 906–phenylalanine 928 is disordered. Positions glycine 910–phenylalanine 928 are enriched in polar residues. Positions proline 929–histidine 993 constitute an SAM domain. The short motif at valine 1000–valine 1002 is the PDZ-binding element.

This sequence belongs to the protein kinase superfamily. Tyr protein kinase family. Ephrin receptor subfamily. In terms of tissue distribution, most abundant in thymus and detectable in brain, retina, kidney, lung and heart. Not detected in skeletal muscle and liver.

It is found in the membrane. It catalyses the reaction L-tyrosyl-[protein] + ATP = O-phospho-L-tyrosyl-[protein] + ADP + H(+). Receptor for members of the ephrin-B family. The chain is Ephrin type-B receptor 5 (EPHB5) from Gallus gallus (Chicken).